A 59-amino-acid chain; its full sequence is uncharacterized protein (59 aa).

This is an uncharacterized protein from Treponema pallidum (strain Nichols).